Here is a 1506-residue protein sequence, read N- to C-terminus: Condensin-2 complex subunit D3 (1506 aa).

A disordered region spans residues 154 to 194 (SNLTQKRKKDHSKSSKDNYRKSRKRGKPPRKEDYQVDELSR). HEAT repeat units lie at residues 442–476 (HKFF…LELS), 532–567 (PGER…LKHC), and 574–605 (QDLL…VMAQ). Ser562 carries the post-translational modification Phosphoserine. Polar residues predominate over residues 884-897 (SDHLPSSQGTTDAL). Residues 884-908 (SDHLPSSQGTTDALDSQPPFQPRSS) form a disordered region. The stretch at 968 to 1004 (TVMVDNYIPNISVCLKDSDPFIRKQTLVLLTNLLQEE) is one HEAT 4 repeat. Positions 1213-1270 (ALRELMNYLREVMQDYRDEINDFFAVDKQLASELEYDMKKYNEQLAQEQALTEHANAT) form a coiled coil. The disordered stretch occupies residues 1317-1353 (QDNADVPPTQSRPSAPRSNFTPTLPPISENGPLKIMS). The span at 1324-1338 (PTQSRPSAPRSNFTP) shows a compositional bias: polar residues. 4 positions are modified to phosphoserine: Ser1359, Ser1368, Ser1381, and Ser1393. 2 disordered regions span residues 1385 to 1412 (LPFN…ESDR) and 1473 to 1506 (PQSP…KTAN). Residues 1393–1405 (SPENPSSHESSLS) are compositionally biased toward low complexity. Positions 1492–1506 (SSRRSLRKAPLKTAN) are enriched in basic residues.

In terms of assembly, component of the condensin-2 complex, which contains the SMC2 and SMC4 heterodimer, and 3 non SMC subunits that probably regulate the complex: NCAPH2, NCAPD3 and NCAPG2.

The protein localises to the nucleus. In terms of biological role, regulatory subunit of the condensin-2 complex, a complex which establishes mitotic chromosome architecture and is involved in physical rigidity of the chromatid axis. May promote the resolution of double-strand DNA catenanes (intertwines) between sister chromatids. Condensin-mediated compaction likely increases tension in catenated sister chromatids, providing directionality for type II topoisomerase-mediated strand exchanges toward chromatid decatenation. Specifically required for decatenation of centromeric ultrafine DNA bridges during anaphase. Early in neurogenesis, may play an essential role to ensure accurate mitotic chromosome condensation in neuron stem cells, ultimately affecting neuron pool and cortex size. The polypeptide is Condensin-2 complex subunit D3 (Ncapd3) (Mus musculus (Mouse)).